Here is a 228-residue protein sequence, read N- to C-terminus: UPF0758 protein CKR_0778 (228 aa).

Residues 106–228 form the MPN domain; that stretch reads RICSPQDAAV…FISLKEKGIL (123 aa). His177, His179, and Asp190 together coordinate Zn(2+). Residues 177–190 carry the JAMM motif motif; sequence HNHPSGDPSPSNED.

This sequence belongs to the UPF0758 family.

The protein is UPF0758 protein CKR_0778 of Clostridium kluyveri (strain NBRC 12016).